The primary structure comprises 427 residues: Actin-related protein 3 (427 aa).

Belongs to the actin family. ARP3 subfamily. In terms of assembly, component of the Arp2/3 complex composed of arp2, act2, arc1/p41-ARC, arc2/p34-ARC, arc3/p21-ARC, arc4/p20-ARC and arc5/p16-ARC.

It localises to the cytoplasm. The protein resides in the cytoskeleton. It is found in the actin patch. In terms of biological role, functions as ATP-binding component of the Arp2/3 complex which is involved in regulation of actin polymerization and together with an activating nucleation-promoting factor (NPF) mediates the formation of branched actin networks. Seems to contact the pointed end of the daughter actin filament. May be involved in cytokinesis. In Schizosaccharomyces pombe (strain 972 / ATCC 24843) (Fission yeast), this protein is Actin-related protein 3 (act2).